We begin with the raw amino-acid sequence, 87 residues long: U3-theraphotoxin-Hhn1i (87 aa).

An N-terminal signal peptide occupies residues 1 to 24 (MVNMEASMFLTFAGLVLLFVVCYA). A propeptide spanning residues 25 to 52 (SESEEKEFPKEMLSSIFAVDNDFKQEER) is cleaved from the precursor. Disulfide bonds link Cys-54–Cys-67, Cys-61–Cys-72, and Cys-66–Cys-79.

This sequence belongs to the neurotoxin 10 (Hwtx-1) family. 51 (Hntx-8) subfamily. Hntx-8 sub-subfamily. Expressed by the venom gland.

It localises to the secreted. In terms of biological role, ion channel inhibitor. The sequence is that of U3-theraphotoxin-Hhn1i from Cyriopagopus hainanus (Chinese bird spider).